We begin with the raw amino-acid sequence, 324 residues long: D-alanine--D-alanine ligase (324 aa).

The region spanning 121 to 321 (NQYLKAFGVR…IKDVMTDIIE (201 aa)) is the ATP-grasp domain. ATP is bound at residue 149–204 (VEKIGLPCFIKPNLGGSSFGVTKVKTREQIQPAIAKAFSEAEEVMIEAFMGGTELT). Mg(2+) is bound by residues D275, E288, and N290.

The protein belongs to the D-alanine--D-alanine ligase family. Mg(2+) serves as cofactor. Requires Mn(2+) as cofactor.

The protein localises to the cytoplasm. It carries out the reaction 2 D-alanine + ATP = D-alanyl-D-alanine + ADP + phosphate + H(+). The protein operates within cell wall biogenesis; peptidoglycan biosynthesis. Its function is as follows. Cell wall formation. This is D-alanine--D-alanine ligase from Bacteroides fragilis (strain YCH46).